The sequence spans 126 residues: MAVVGLGTDIAEIERVEKALSRSGEAFAQRILTDSEFEVFQQLKQKGRYLAKRFAAKEAASKALGTGIALGVTFHDFEISNDEHGKPVLSLHKKAREIADASGTKSIHLTISDERHYAVATVLLES.

2 residues coordinate Mg(2+): aspartate 9 and glutamate 58.

Belongs to the P-Pant transferase superfamily. AcpS family. Requires Mg(2+) as cofactor.

The protein resides in the cytoplasm. It carries out the reaction apo-[ACP] + CoA = holo-[ACP] + adenosine 3',5'-bisphosphate + H(+). Its function is as follows. Transfers the 4'-phosphopantetheine moiety from coenzyme A to a Ser of acyl-carrier-protein. The polypeptide is Holo-[acyl-carrier-protein] synthase (Vibrio atlanticus (strain LGP32) (Vibrio splendidus (strain Mel32))).